Consider the following 103-residue polypeptide: Toluene-4-monooxygenase system, effector component (103 aa).

The protein belongs to the TmoD/XamoD family. As to quaternary structure, the alkene monooxygenase multicomponent enzyme system is composed of an electron transfer component and a monooxygenase component interacting with the effector protein TmoD. The electron transfer component is composed of a ferredoxin reductase (TmoF) and a ferredoxin (TmoC), and the monooxygenase component is formed by a heterohexamer (dimer of heterotrimers) of two alpha subunits (TmoA), two beta subunits (TmoE) and two gamma subunits (TmoB).

It functions in the pathway xenobiotic degradation; toluene degradation. In terms of biological role, effector component of the toluene-4-monooxygenase multicomponent enzyme system which catalyzes the O2- and NADH-dependent hydroxylation of toluene to form p-cresol. Required for optimal efficiency and specificity of the holoenzyme. The sequence is that of Toluene-4-monooxygenase system, effector component from Ectopseudomonas mendocina (Pseudomonas mendocina).